The chain runs to 362 residues: E3 ubiquitin-protein ligase rififylin (362 aa).

Positions 17–37 are disordered; that stretch reads ETPPPQGARTQAYSNPGYSSF. The segment covering 24–37 has biased composition (polar residues); that stretch reads ARTQAYSNPGYSSF. An FYVE-type zinc finger spans residues 41–93; it reads TGSEPSCKACGVHFASTTRKQTCLDCKKNFCMTCSSQEGNGPRLCLLCLRFRA. One can recognise an SAP 1 domain in the interval 101 to 120; sequence LMKMKVKDLRDYLSLHDIST. The segment at 162 to 183 is disordered; it reads LTQPQSSTVPPTSPGLPSSPAQ. Phosphoserine occurs at positions 225, 228, 231, and 239. One can recognise an SAP 2 domain in the interval 249–263; that stretch reads IEGLTVRQLKEILAR. The segment at 315 to 350 adopts an RING-type zinc-finger fold; sequence CKICMDSPIDCVLLECGHMVTCTKCGKRMNECPICR.

As to quaternary structure, interacts with CASP8 and CASP10. Interacts with RIPK1 (via protein kinase domain); involved in RIPK1 ubiquitination. Interacts with PRR5L. Interacts (via RING-type zinc finger) with p53/TP53; involved in p53/TP53 ubiquitination. Interacts (via RING-type zinc finger) with MDM2; the interaction stabilizes MDM2. Autoubiquitinated. Post-translationally, palmitoylated. In terms of processing, undergoes caspase-mediated cleavage upon death-receptor activation, by TNFSF10 for instance. May be mediated by the caspases CASP8 and CASP10 in a negative feedback loop. In terms of tissue distribution, ubiquitous. Detected in cerebrum, cerebellum, midbrain, brain stem, hippocampus, striatum, liver, heart, lung, kidney, muscle, spleen and testis.

The protein localises to the cytoplasm. The protein resides in the cytosol. Its subcellular location is the cell membrane. It is found in the recycling endosome membrane. It catalyses the reaction S-ubiquitinyl-[E2 ubiquitin-conjugating enzyme]-L-cysteine + [acceptor protein]-L-lysine = [E2 ubiquitin-conjugating enzyme]-L-cysteine + N(6)-ubiquitinyl-[acceptor protein]-L-lysine.. It participates in protein modification; protein ubiquitination. E3 ubiquitin-protein ligase that regulates several biological processes through the ubiquitin-mediated proteasomal degradation of various target proteins. Mediates 'Lys-48'-linked polyubiquitination of PRR5L and its subsequent proteasomal degradation thereby indirectly regulating cell migration through the mTORC2 complex. Also ubiquitinates the caspases CASP8 and CASP10, promoting their proteasomal degradation, to negatively regulate apoptosis downstream of death domain receptors. Also negatively regulates the tumor necrosis factor-mediated signaling pathway through targeting of RIPK1 to ubiquitin-mediated proteasomal degradation. Negatively regulates p53/TP53 through its direct ubiquitination and targeting to proteasomal degradation. Indirectly, may also negatively regulate p53/TP53 through ubiquitination and degradation of SFN. May also play a role in endocytic recycling. The protein is E3 ubiquitin-protein ligase rififylin of Rattus norvegicus (Rat).